A 356-amino-acid polypeptide reads, in one-letter code: Phosphotriesterase-related protein (356 aa).

A divalent metal cation is bound by residues His23, His25, Glu175, His207, His236, and Asp304.

It belongs to the metallo-dependent hydrolases superfamily. Phosphotriesterase family. A divalent metal cation is required as a cofactor.

In Aedes aegypti (Yellowfever mosquito), this protein is Phosphotriesterase-related protein.